The sequence spans 110 residues: Large ribosomal subunit protein uL22 (110 aa).

This sequence belongs to the universal ribosomal protein uL22 family. As to quaternary structure, part of the 50S ribosomal subunit.

Functionally, this protein binds specifically to 23S rRNA; its binding is stimulated by other ribosomal proteins, e.g. L4, L17, and L20. It is important during the early stages of 50S assembly. It makes multiple contacts with different domains of the 23S rRNA in the assembled 50S subunit and ribosome. Its function is as follows. The globular domain of the protein is located near the polypeptide exit tunnel on the outside of the subunit, while an extended beta-hairpin is found that lines the wall of the exit tunnel in the center of the 70S ribosome. The sequence is that of Large ribosomal subunit protein uL22 from Vibrio cholerae serotype O1 (strain ATCC 39541 / Classical Ogawa 395 / O395).